A 154-amino-acid polypeptide reads, in one-letter code: MTTTTTFKGVDPNSRNSSRVLRPPGGGSNFSLGFDEPAEQPVRKNKMASNIFGTPEENPPSWAKSAGSKSSGGREDSESPGTQRSNSSEASSGDFLDLKGEGDMHENVDTDFQANLAQMEEKPVPAAPVPSPVAPAPVPSRRNPPGGKSSLVLG.

An N-acetylmethionine modification is found at Met1. The span at 1-19 (MTTTTTFKGVDPNSRNSSR) shows a compositional bias: polar residues. A disordered region spans residues 1-154 (MTTTTTFKGV…PGGKSSLVLG (154 aa)). Residue Thr2 is modified to N-acetylthreonine; in Hematological and neurological expressed 1 protein, N-terminally processed. Phosphoserine is present on residues Ser28 and Ser31. Thr54 bears the Phosphothreonine mark. A phosphoserine mark is found at Ser71, Ser87, Ser88, and Ser92. The span at 79 to 91 (SPGTQRSNSSEAS) shows a compositional bias: polar residues. Residues 96–108 (LDLKGEGDMHENV) are compositionally biased toward basic and acidic residues. Positions 125–138 (PAAPVPSPVAPAPV) are enriched in pro residues. Position 131 is a phosphoserine (Ser131). Position 148 is an N6-acetyllysine (Lys148).

The protein belongs to the JUPITER family. As to quaternary structure, interacts with the complex composed, at least, of APC, CTNNB1 and GSK3B; the interaction takes place with the inactive form of GSK3B (phosphorylated at 'Ser-9'). Expressed in yolk sac, fetal brain, brain, spleen and bone marrow.

Its subcellular location is the nucleus. It localises to the cytoplasm. Modulates negatively AKT-mediated GSK3B signaling. Induces CTNNB1 'Ser-33' phosphorylation and degradation through the suppression of the inhibitory 'Ser-9' phosphorylation of GSK3B, which represses the function of the APC:CTNNB1:GSK3B complex and the interaction with CDH1/E-cadherin in adherent junctions. Plays a role in the regulation of cell cycle and cell adhesion. Has an inhibitory role on AR-signaling pathway through the induction of receptor proteasomal degradation. The polypeptide is Jupiter microtubule associated homolog 1 (Mus musculus (Mouse)).